Reading from the N-terminus, the 56-residue chain is Large ribosomal subunit protein bL33 (56 aa).

It belongs to the bacterial ribosomal protein bL33 family.

The sequence is that of Large ribosomal subunit protein bL33 from Beutenbergia cavernae (strain ATCC BAA-8 / DSM 12333 / CCUG 43141 / JCM 11478 / NBRC 16432 / NCIMB 13614 / HKI 0122).